We begin with the raw amino-acid sequence, 289 residues long: Mitochondrial fission regulator 1-like (289 aa).

Thr27 carries the post-translational modification Phosphothreonine. Ser38 is subject to Phosphoserine. Ser100 carries the phosphoserine; by AMPK modification. 3 positions are modified to phosphoserine: Ser107, Ser221, and Ser222. Ser235 is modified (phosphoserine; by AMPK). Phosphoserine occurs at positions 258 and 270.

The protein belongs to the MTFR1 family. In terms of processing, phosphorylated by AMPK. Upon stress, phosphorylation at Ser-100 and Ser-235 by AMPK is sufficient to induce mitochondrial fragmentation.

The protein localises to the mitochondrion outer membrane. Functionally, mitochondrial protein required for adaptation of miochondrial dynamics to metabolic changes. Regulates mitochondrial morphology at steady state and mediates AMPK-dependent stress-induced mitochondrial fragmentation via the control of OPA1 levels. The chain is Mitochondrial fission regulator 1-like (Mtfr1l) from Mus musculus (Mouse).